The chain runs to 313 residues: Ribosomal RNA small subunit methyltransferase H (313 aa).

Residues G35–H37, D55, F79, D101, and Q108 each bind S-adenosyl-L-methionine.

Belongs to the methyltransferase superfamily. RsmH family.

It is found in the cytoplasm. The catalysed reaction is cytidine(1402) in 16S rRNA + S-adenosyl-L-methionine = N(4)-methylcytidine(1402) in 16S rRNA + S-adenosyl-L-homocysteine + H(+). Functionally, specifically methylates the N4 position of cytidine in position 1402 (C1402) of 16S rRNA. The chain is Ribosomal RNA small subunit methyltransferase H from Escherichia coli O81 (strain ED1a).